Consider the following 194-residue polypeptide: Peptidyl-tRNA hydrolase (194 aa).

Tyr17 contributes to the tRNA binding site. Catalysis depends on His22, which acts as the Proton acceptor. Residues Phe68, Asn70, and Asn116 each coordinate tRNA.

The protein belongs to the PTH family. Monomer.

The protein localises to the cytoplasm. It carries out the reaction an N-acyl-L-alpha-aminoacyl-tRNA + H2O = an N-acyl-L-amino acid + a tRNA + H(+). In terms of biological role, hydrolyzes ribosome-free peptidyl-tRNAs (with 1 or more amino acids incorporated), which drop off the ribosome during protein synthesis, or as a result of ribosome stalling. Functionally, catalyzes the release of premature peptidyl moieties from peptidyl-tRNA molecules trapped in stalled 50S ribosomal subunits, and thus maintains levels of free tRNAs and 50S ribosomes. This Actinobacillus succinogenes (strain ATCC 55618 / DSM 22257 / CCUG 43843 / 130Z) protein is Peptidyl-tRNA hydrolase.